We begin with the raw amino-acid sequence, 144 residues long: Large ribosomal subunit protein uL16 (144 aa).

A compositionally biased stretch (basic residues) spans 1-19; the sequence is MLLPKRVKYRRQHRPKTTG. Residues 1–23 form a disordered region; it reads MLLPKRVKYRRQHRPKTTGRSKG.

This sequence belongs to the universal ribosomal protein uL16 family. As to quaternary structure, part of the 50S ribosomal subunit.

Binds 23S rRNA and is also seen to make contacts with the A and possibly P site tRNAs. This Staphylococcus saprophyticus subsp. saprophyticus (strain ATCC 15305 / DSM 20229 / NCIMB 8711 / NCTC 7292 / S-41) protein is Large ribosomal subunit protein uL16.